Consider the following 557-residue polypeptide: Fatty acyl-CoA hydrolase precursor, medium chain (557 aa).

An N-terminal signal peptide occupies residues 1 to 25; the sequence is MATEKNTLLSLILTAGITALVATGQ. A disulfide bond links cysteine 93 and cysteine 122. Serine 227 functions as the Acyl-ester intermediate in the catalytic mechanism. Residues glutamate 345 and histidine 460 each act as charge relay system in the active site. An N-linked (GlcNAc...) asparagine glycan is attached at asparagine 476.

The protein belongs to the type-B carboxylesterase/lipase family. In terms of tissue distribution, highest levels in uropygial gland, much lower in liver and kidney.

Fatty acid biosynthesis chain termination and release of the free fatty acid product is achieved by hydrolysis of the thio ester by a thioesterase. This thioesterase may be associated with peroxisome proliferation and may play a role in the production of 3-hydroxy fatty acid diester pheromones. This chain is Fatty acyl-CoA hydrolase precursor, medium chain, found in Anas platyrhynchos (Mallard).